The chain runs to 167 residues: Putative NADH-quinone oxidoreductase subunit B 2 (167 aa).

This sequence belongs to the complex I 20 kDa subunit family. As to quaternary structure, NDH-1 is composed of 14 different subunits. Subunits NuoB, C, D, E, F, and G constitute the peripheral sector of the complex.

It localises to the cell inner membrane. It carries out the reaction a quinone + NADH + 5 H(+)(in) = a quinol + NAD(+) + 4 H(+)(out). In terms of biological role, NDH-1 shuttles electrons from NADH, via FMN and iron-sulfur (Fe-S) centers, to quinones in the respiratory chain. Couples the redox reaction to proton translocation (for every two electrons transferred, four hydrogen ions are translocated across the cytoplasmic membrane), and thus conserves the redox energy in a proton gradient. This chain is Putative NADH-quinone oxidoreductase subunit B 2, found in Burkholderia pseudomallei (strain 1710b).